The sequence spans 494 residues: MDKYGHIAHQEGDVCYYIPRLFKYNSYYSGTEDVRIFVGDLKYRMRVSLQICEKYYDRRLSMLFWKNHPLQQIHLIGCIIGLQFKWIGKQEYIFFQLDDCTSDSSLVGYTSDMRFLTCKVKKDSILSWGLNITDLIGLTLHVYGQASLNYQELQVEYLRLCYSLTEEIDHWKITMNMREQLDTPWSLSDFVIGELFTQEQEWTPETSQIEVVNPDFVGIGYKTPESKRNETTFIEQLQEERLKDELEIISPYNSTDTSNSVHSLSFRFVSSLKDFPETHFLNSGDQIDNGNDEQLKKLEYQSANLPVMIPNRTSAKSNLMLILLGLQMKEISNSDLYKLKEVRSVVTSLASFLFQQQNVGVMKSFDSLEKEAFRDLVNRLVSQGLIGLKDKTSETFDLLPLKNLFEYAEKRISVLMKLQCYTGTVQLSHVQEKLHLPYITTNGIVDVFKECLKRTKKQYPEVLKNWWIDLDPKNGMEDQNSGILLHLEYAAAYS.

The OB DNA-binding region spans 62 to 159 (MLFWKNHPLQ…YQELQVEYLR (98 aa)). Winged helix-turn-helix (wHTH) stretches follow at residues 311–397 (NRTS…ETFD) and 396–494 (FDLL…AAYS).

As to quaternary structure, interacts with CDC13 and TEN1.

The protein resides in the chromosome. The protein localises to the telomere. Its function is as follows. Has a role in telomere length regulation and telomere end protection. Acts as an inhibitor of telomerase loading through its interaction with CDC13. This chain is Protein STN1 (STN1), found in Saccharomyces cerevisiae (strain ATCC 204508 / S288c) (Baker's yeast).